A 331-amino-acid chain; its full sequence is Spondin-2 (331 aa).

An N-terminal signal peptide occupies residues 1–26 (MENPSPAAALGKALCALLLATLGAAG). Residues 31 to 221 (GESICSARAL…EITSSSPSHP (191 aa)) form the Spondin domain. C35 and C171 are joined by a disulfide. E141 provides a ligand contact to a divalent metal cation. Positions 160, 188, and 192 each coordinate Ca(2+). Residues 277–331 (DCEVSLWSSWGLCGGHCGRLGTKSRTRYVRVQPANNGSPCPELEEEAECVPDNCV) form the TSP type-1 domain. W283 carries C-linked (Man) tryptophan glycosylation.

In terms of assembly, monomer. Interacts with integrin. Expressed in normal lung tissue but not in lung carcinoma cell lines.

Its subcellular location is the secreted. The protein localises to the extracellular space. It is found in the extracellular matrix. In terms of biological role, cell adhesion protein that promotes adhesion and outgrowth of hippocampal embryonic neurons. Binds directly to bacteria and their components and functions as an opsonin for macrophage phagocytosis of bacteria. Essential in the initiation of the innate immune response and represents a unique pattern-recognition molecule in the ECM for microbial pathogens. Binds bacterial lipopolysaccharide (LPS). In Homo sapiens (Human), this protein is Spondin-2 (SPON2).